Consider the following 195-residue polypeptide: Adenylate kinase (195 aa).

8 to 16 (GIPGVGKTT) contacts ATP.

This sequence belongs to the archaeal adenylate kinase family. Homotrimer.

It localises to the cytoplasm. The catalysed reaction is AMP + ATP = 2 ADP. This Saccharolobus solfataricus (strain ATCC 35092 / DSM 1617 / JCM 11322 / P2) (Sulfolobus solfataricus) protein is Adenylate kinase (adkA).